We begin with the raw amino-acid sequence, 218 residues long: MATHSPCIVIGDDEQGYDLDLFCIPKHYADDLEKVYIPHGLIMDRTERLAREIMKGMGGHHIVALCVLKGGYKFFADLLDYIKALNRNSDKSIPMTVDFIRLKSYCNDQSTGDIKVIGGDDLSTLTGKNVLIVEDIIDTGKTMKTLLSLLKQYNPKMVKVASLLVKRTPRSVGYRPDFVGFEVPDKFVVGYALDYNEYFRDLNHICVISETGKQKYKA.

GMP contacts are provided by residues Lys69, Glu134–Thr142, Lys166, Lys186–Val188, and Asp194. Asp138 (proton acceptor) is an active-site residue. Asp194 contributes to the Mg(2+) binding site.

This sequence belongs to the purine/pyrimidine phosphoribosyltransferase family. Homotetramer. The cofactor is Mg(2+).

Its subcellular location is the cytoplasm. It carries out the reaction IMP + diphosphate = hypoxanthine + 5-phospho-alpha-D-ribose 1-diphosphate. The catalysed reaction is GMP + diphosphate = guanine + 5-phospho-alpha-D-ribose 1-diphosphate. It participates in purine metabolism; IMP biosynthesis via salvage pathway; IMP from hypoxanthine: step 1/1. Functionally, converts guanine to guanosine monophosphate, and hypoxanthine to inosine monophosphate. Transfers the 5-phosphoribosyl group from 5-phosphoribosylpyrophosphate onto the purine. Plays a central role in the generation of purine nucleotides through the purine salvage pathway. The polypeptide is Hypoxanthine-guanine phosphoribosyltransferase (HPRT1) (Gallus gallus (Chicken)).